Reading from the N-terminus, the 159-residue chain is Ribosomal RNA large subunit methyltransferase H (159 aa).

S-adenosyl-L-methionine-binding positions include Leu76, Gly108, and 127-132; that span reads FSKMTL.

It belongs to the RNA methyltransferase RlmH family. As to quaternary structure, homodimer.

It localises to the cytoplasm. It catalyses the reaction pseudouridine(1915) in 23S rRNA + S-adenosyl-L-methionine = N(3)-methylpseudouridine(1915) in 23S rRNA + S-adenosyl-L-homocysteine + H(+). Functionally, specifically methylates the pseudouridine at position 1915 (m3Psi1915) in 23S rRNA. The protein is Ribosomal RNA large subunit methyltransferase H of Bacillus cereus (strain ATCC 14579 / DSM 31 / CCUG 7414 / JCM 2152 / NBRC 15305 / NCIMB 9373 / NCTC 2599 / NRRL B-3711).